A 417-amino-acid chain; its full sequence is Gamma-glutamyl phosphate reductase (417 aa).

It belongs to the gamma-glutamyl phosphate reductase family.

It localises to the cytoplasm. It carries out the reaction L-glutamate 5-semialdehyde + phosphate + NADP(+) = L-glutamyl 5-phosphate + NADPH + H(+). The protein operates within amino-acid biosynthesis; L-proline biosynthesis; L-glutamate 5-semialdehyde from L-glutamate: step 2/2. Functionally, catalyzes the NADPH-dependent reduction of L-glutamate 5-phosphate into L-glutamate 5-semialdehyde and phosphate. The product spontaneously undergoes cyclization to form 1-pyrroline-5-carboxylate. The chain is Gamma-glutamyl phosphate reductase from Bacteroides thetaiotaomicron (strain ATCC 29148 / DSM 2079 / JCM 5827 / CCUG 10774 / NCTC 10582 / VPI-5482 / E50).